Here is a 305-residue protein sequence, read N- to C-terminus: Tyrosine recombinase XerC (305 aa).

The 92-residue stretch at 4 to 95 folds into the Core-binding (CB) domain; that stretch reads TQIQELIIKW…AIKNFYKFLE (92 aa). The 183-residue stretch at 116 to 298 folds into the Tyr recombinase domain; the sequence is LLPKALSEEE…SIKHLETAYV (183 aa). Residues R159, K182, H250, R253, and H276 contribute to the active site. Y285 (O-(3'-phospho-DNA)-tyrosine intermediate) is an active-site residue.

It belongs to the 'phage' integrase family. XerC subfamily. As to quaternary structure, forms a cyclic heterotetrameric complex composed of two molecules of XerC and two molecules of XerD.

It is found in the cytoplasm. Its function is as follows. Site-specific tyrosine recombinase, which acts by catalyzing the cutting and rejoining of the recombining DNA molecules. The XerC-XerD complex is essential to convert dimers of the bacterial chromosome into monomers to permit their segregation at cell division. It also contributes to the segregational stability of plasmids. The sequence is that of Tyrosine recombinase XerC from Rickettsia bellii (strain RML369-C).